We begin with the raw amino-acid sequence, 337 residues long: SAGA complex subunit SPT3 (337 aa).

The interval lysine 92 to methionine 131 is disordered. Positions aspartate 113 to glycine 128 are enriched in basic and acidic residues. Phosphoserine is present on serine 270.

Belongs to the SPT3 family. As to quaternary structure, component of the 1.8 MDa SAGA (Spt-Ada-Gcn5 acetyltransferase) complex, which is composed of 19 subunits TRA1, SPT7, TAF5, NGG1/ADA3, SGF73, SPT20/ADA5, SPT8, TAF12, TAF6, HFI1/ADA1, UBP8, GCN5, ADA2, SPT3, SGF29, TAF10, TAF9, SGF11 and SUS1. The SAGA complex is composed of 4 modules, namely the HAT (histone acetyltransferase) module (GCN5, ADA2, NGG1/ADA3 and SGF29), the DUB (deubiquitinating) module (UBP8, SGF11, SGF73 and SUS1), the core or TAF (TBP-associated factor) module (TAF5, TAF6, TAF9, TAF10 and TAF12), and the Tra1 or SPT (Suppressor of Ty) module (TRA1, HFI1/ADA1, SPT3, SPT7, SPT8 and SPT20/ADA5). The Tra1/SPT module binds activators, the core module recruits TBP (TATA-binding protein), the HAT module contains the histone H3 acetyltransferase GCN5, and the DUB module comprises the histone H2B deubiquitinase UBP8. Also identified in an altered form of SAGA, named SALSA (SAGA altered, Spt8 absent) or SLIK (SAGA-like) complex, which contains a C-terminal truncated form of SPT7 and is missing SPT8. However, it has been shown that the SAGA and SAGA-like SALSA/SLIK transcriptional coactivators are structurally and biochemically equivalent.

The protein resides in the nucleus. The protein localises to the cytoplasm. Component of the transcription coactivator SAGA complex. SAGA acts as a general cofactor required for essentially all RNA polymerase II transcription. At the promoters, SAGA is required for transcription pre-initiation complex (PIC) recruitment. It influences RNA polymerase II transcriptional activity through different activities such as TBP interaction (via core/TAF module) and promoter selectivity, interaction with transcription activators (via Tra1/SPT module), and chromatin modification through histone acetylation (via HAT module) and deubiquitination (via DUB module). SAGA preferentially acetylates histones H3 (to form H3K9ac, H3K14ac, H3K18ac and H3K23ac) and H2B and deubiquitinates histone H2B. SAGA interacts with DNA via upstream activating sequences (UASs). Also identified in a modified version of SAGA named SALSA or SLIK. The cleavage of SPT7 and the absence of the SPT8 subunit in SLIK neither drive any major conformational differences in its structure compared with SAGA, nor significantly affect HAT, DUB, or DNA-binding activities. SPT3 is required for recruitment of TATA-binding protein (TBP) to SAGA-dependent promoters. During SAGA-mediated transcriptional inhibition, SPT3 and SPT8 prevent binding of TBP to the TATA box. Required for diploid filamentous growth and haploid invasive growth. The sequence is that of SAGA complex subunit SPT3 (SPT3) from Saccharomyces cerevisiae (strain ATCC 204508 / S288c) (Baker's yeast).